The following is a 164-amino-acid chain: Peptidyl-prolyl cis-trans isomerase A (164 aa).

Met-1 bears the N-acetylmethionine mark. N-acetylvaline; in Peptidyl-prolyl cis-trans isomerase A, N-terminally processed is present on Val-2. The region spanning 7–163 (FFDITADGEP…KKITISDCGQ (157 aa)) is the PPIase cyclophilin-type domain. Residue Lys-28 is modified to N6-acetyllysine; alternate. Lys-28 is covalently cross-linked (Glycyl lysine isopeptide (Lys-Gly) (interchain with G-Cter in SUMO2); alternate). A Glycyl lysine isopeptide (Lys-Gly) (interchain with G-Cter in ubiquitin); alternate cross-link involves residue Lys-28. Residues Lys-44 and Lys-76 each carry the N6-acetyllysine modification. Position 77 is a phosphoserine (Ser-77). N6-acetyllysine; alternate is present on Lys-82. Lys-82 participates in a covalent cross-link: Glycyl lysine isopeptide (Lys-Gly) (interchain with G-Cter in SUMO2); alternate. A Phosphothreonine modification is found at Thr-93. A glycan (N-linked (GlcNAc...) asparagine) is linked at Asn-108. 3 positions are modified to N6-acetyllysine: Lys-125, Lys-131, and Lys-133.

It belongs to the cyclophilin-type PPIase family. PPIase A subfamily. In terms of assembly, interacts with protein phosphatase PPP3CA/calcineurin A. Interacts with isoform 2 of BSG/CD147. Interacts with FOXO1; the interaction promotes FOXO1 dephosphorylation, nuclear accumulation and transcriptional activity. Interacts with integrin ITGA2B:ITGB3; the interaction is ROS and peptidyl-prolyl cis-trans isomerase (PPIase) activity-dependent and is increased in the presence of thrombin. Interacts with MAP3K5. Interacts with TARDBP; the interaction is dependent on the RNA-binding activity of TARDBP and the PPIase activity of PPIA/CYPA and the acetylation of PPIA/CYPA at Lys-125 favors the interaction. Interacts with HNRNPA1, HNRNPA2B1, HNRNPC, RBMX, HNRNPK and HNRNPM. Post-translationally, acetylation at Lys-125 markedly inhibits catalysis of cis to trans isomerization. PPIA acetylation also antagonizes the immunosuppressive effects of cyclosporine by inhibiting the sequential steps of cyclosporine binding and calcineurin inhibition. Acetylation at Lys-125 favors the interaction with TARDBP.

It localises to the cytoplasm. It is found in the secreted. The protein resides in the nucleus. It catalyses the reaction [protein]-peptidylproline (omega=180) = [protein]-peptidylproline (omega=0). With respect to regulation, binds cyclosporin A (CsA). CsA mediates some of its effects via an inhibitory action on PPIase. Catalyzes the cis-trans isomerization of proline imidic peptide bonds in oligopeptides. Exerts a strong chemotactic effect on leukocytes partly through activation of one of its membrane receptors BSG/CD147, initiating a signaling cascade that culminates in MAPK/ERK activation. Activates endothelial cells (ECs) in a proinflammatory manner by stimulating activation of NF-kappa-B and ERK, JNK and p38 MAP-kinases and by inducing expression of adhesion molecules including SELE and VCAM1. Induces apoptosis in ECs by promoting the FOXO1-dependent expression of CCL2 and BCL2L11 which are involved in EC chemotaxis and apoptosis. In response to oxidative stress, initiates proapoptotic and antiapoptotic signaling in ECs via activation of NF-kappa-B and AKT1 and up-regulation of antiapoptotic protein BCL2. Negatively regulates MAP3K5/ASK1 kinase activity, autophosphorylation and oxidative stress-induced apoptosis mediated by MAP3K5/ASK1. Necessary for the assembly of TARDBP in heterogeneous nuclear ribonucleoprotein (hnRNP) complexes and regulates TARDBP binding to RNA UG repeats and TARDBP-dependent expression of HDAC6, ATG7 and VCP which are involved in clearance of protein aggregates. Plays an important role in platelet activation and aggregation. Regulates calcium mobilization and integrin ITGA2B:ITGB3 bidirectional signaling via increased ROS production as well as by facilitating the interaction between integrin and the cell cytoskeleton. Binds heparan sulfate glycosaminoglycans. The protein is Peptidyl-prolyl cis-trans isomerase A (Ppia) of Rattus norvegicus (Rat).